Here is a 62-residue protein sequence, read N- to C-terminus: Glucagon (62 aa).

The protein belongs to the glucagon family.

It localises to the secreted. Functionally, promotes hydrolysis of glycogen and lipids, and raises the blood sugar level. This chain is Glucagon (gcg), found in Scyliorhinus canicula (Small-spotted catshark).